A 741-amino-acid chain; its full sequence is Transcription activator of gluconeogenesis BDBG_05438 (741 aa).

The segment at 1–70 (MTASTRNGSP…NAKDPLRPRR (70 aa)) is disordered. The span at 25–61 (KSMTTTPANPPETKSQTNGKGSGTAQSSQKPASTSAN) shows a compositional bias: polar residues. The segment at residues 77–105 (CFACQRAHLTCGDERPCQRCIKRGLQDAC) is a DNA-binding region (zn(2)-C6 fungal-type). Disordered stretches follow at residues 135 to 163 (QANTTRNIPNQRGNASNSNSNKVSRQSVS), 202 to 239 (SVFHAQSPSSTQNFDLSSNPQTQNLSSAMSQTASSVSG), 285 to 321 (GAGDTPPSDSATQRGSIGRSSGTFTAQNFGDSANNQS), 401 to 421 (TNLMHPTNTPQQSRISTPGLK), 559 to 590 (GSSLSSASSVRGSSTFTPRNNNTHNSIDPHTG), and 655 to 741 (FHGK…AKRG). Residues 202–226 (SVFHAQSPSSTQNFDLSSNPQTQNL) show a composition bias toward polar residues. A compositionally biased stretch (low complexity) spans 227-238 (SSAMSQTASSVS). Polar residues-rich tracts occupy residues 291-321 (PSDSATQRGSIGRSSGTFTAQNFGDSANNQS) and 401-416 (TNLMHPTNTPQQSRIS). Over residues 560 to 572 (SSLSSASSVRGSS) the composition is skewed to low complexity. The segment covering 573–586 (TFTPRNNNTHNSID) has biased composition (polar residues). Over residues 672–718 (TGTTTSGDVATTTATGTSTSNGANANTNGNNTNPNDPSTAASSSASS) the composition is skewed to low complexity. Basic residues predominate over residues 723 to 732 (RSNHLGKRGG).

It belongs to the ERT1/acuK family.

It localises to the nucleus. Its function is as follows. Transcription factor which regulates nonfermentable carbon utilization. Activator of gluconeogenetic genes. This Blastomyces gilchristii (strain SLH14081) (Blastomyces dermatitidis) protein is Transcription activator of gluconeogenesis BDBG_05438.